The following is a 282-amino-acid chain: Heterogeneous nuclear ribonucleoprotein C (282 aa).

One can recognise an RRM domain in the interval 17–88; sequence SRVFIGNLNT…QVLDINLAAE (72 aa). Disordered stretches follow at residues 131–177 and 208–282; these read APPP…RLKG and QSKQ…EEDS. Positions 141–147 match the Nuclear localization signal motif; it reads PSKRQRV. Residues 161-172 are compositionally biased toward low complexity; the sequence is SKSGQRGGSSKS. Residues 177–217 are a coiled coil; that stretch reads GDDLQAIKKELSQIKQRVDSLLENLERIERDQSKQDTKLDD. Basic and acidic residues-rich tracts occupy residues 208–217 and 224–235; these read QSKQDTKLDD and LKKEETGVKLIE. 2 stretches are compositionally biased toward acidic residues: residues 236-257 and 265-282; these read ETGD…EDTL and KETE…EEDS.

It belongs to the RRM HNRPC family. RALY subfamily. Tetramer.

The protein localises to the nucleus. Functionally, binds pre-mRNA and nucleates the assembly of 40S hnRNP particles. Interacts with poly-U tracts in the 3'-UTR or 5'-UTR of mRNA and modulates the stability and the level of translation of bound mRNA molecules. Single HNRNPC tetramers bind 230-240 nucleotides. Trimers of HNRNPC tetramers bind 700 nucleotides. May play a role in the early steps of spliceosome assembly and pre-mRNA splicing. N6-methyladenosine (m6A) has been shown to alter the local structure in mRNAs and long non-coding RNAs (lncRNAs) via a mechanism named 'm(6)A-switch', facilitating binding of HNRNPC, leading to regulation of mRNA splicing. This Xenopus laevis (African clawed frog) protein is Heterogeneous nuclear ribonucleoprotein C (hnrnpc).